Here is a 272-residue protein sequence, read N- to C-terminus: Rhomboid-type serine protease B (272 aa).

Helical transmembrane passes span 30-50, 72-92, 103-123, 133-153, and 164-184; these read IVLL…WSVV, PFIH…TPLL, TAVA…YILV, AVVG…IKTF, and TKIP…IFVP. Residue serine 138 is the Nucleophile of the active site. A glycan (N-linked (GlcNAc...) asparagine) is linked at asparagine 185. A helical transmembrane segment spans residues 186–206; that stretch reads TSFLGHLSAIIIGYLLGLGYL. Histidine 191 is an active-site residue.

It belongs to the peptidase S54 family.

The protein localises to the membrane. It carries out the reaction Cleaves type-1 transmembrane domains using a catalytic dyad composed of serine and histidine that are contributed by different transmembrane domains.. In terms of biological role, rhomboid protease that catalyzes intramembrane proteolysis. Required for transcription factor srbA activation by mediating its release from the membrane and thereby regulating its activity under hypoxic conditions. Essential for iron homeostasis and resistance to azoles such as voriconazole. Required for virulence in murine models of invasive pulmonary aspergillosis (IPA). The polypeptide is Rhomboid-type serine protease B (Aspergillus fumigatus (strain CBS 144.89 / FGSC A1163 / CEA10) (Neosartorya fumigata)).